The sequence spans 241 residues: Ribosome-recycling factor, mitochondrial (241 aa).

The protein belongs to the RRF family.

It is found in the mitochondrion. Necessary for protein synthesis in mitochondria. Functions as a ribosome recycling factor in mitochondria. This Kluyveromyces lactis (strain ATCC 8585 / CBS 2359 / DSM 70799 / NBRC 1267 / NRRL Y-1140 / WM37) (Yeast) protein is Ribosome-recycling factor, mitochondrial (RRF1).